The following is a 422-amino-acid chain: Beta-1,3-galactosyltransferase 2 (422 aa).

Over 1–24 the chain is Cytoplasmic; the sequence is MLQWRRRHCCFAKMTWNAKRSLFR. The helical; Signal-anchor for type II membrane protein transmembrane segment at 25–45 threads the bilayer; sequence THLIGVLSLVFLFAMFLFFNH. Residues 46–422 lie on the Lumenal side of the membrane; that stretch reads HDWLPGRAGF…AGRYRHRKLH (377 aa). N-linked (GlcNAc...) asparagine glycosylation is found at N75, N100, N119, N176, and N226. A disordered region spans residues 90-110; the sequence is TLRPQTATNSNNTDLSPQGVT.

The protein belongs to the glycosyltransferase 31 family. Requires Mn(2+) as cofactor. In terms of tissue distribution, detected in heart and brain.

It localises to the golgi apparatus membrane. The enzyme catalyses an N-acetyl-beta-D-glucosaminyl derivative + UDP-alpha-D-galactose = a beta-D-galactosyl-(1-&gt;3)-N-acetyl-beta-D-glucosaminyl derivative + UDP + H(+). It catalyses the reaction a beta-D-GlcNAc-(1-&gt;3)-beta-D-Gal-(1-&gt;4)-beta-D-Glc-(1&lt;-&gt;1)-Cer(d18:1(4E)) + UDP-alpha-D-galactose = a beta-D-Gal-(1-&gt;3)-beta-D-GlcNAc-(1-&gt;3)-beta-D-Gal-(1-&gt;4)-beta-D-Glc-(1&lt;-&gt;1')-Cer(d18:1(4E)) + UDP + H(+). The catalysed reaction is a neolactoside IV(3)-beta-GlcNAc-nLc4Cer(d18:1(4E)) + UDP-alpha-D-galactose = a neolactoside IV(3)-beta-[Gal-beta-(1-&gt;3)-GlcNAc]-nLc4Cer(d18:1(4E)) + UDP + H(+). Its pathway is protein modification; protein glycosylation. In terms of biological role, beta-1,3-galactosyltransferase that transfers galactose from UDP-galactose to substrates with a terminal beta-N-acetylglucosamine (beta-GlcNAc) residue. Can also utilize substrates with a terminal galactose residue, albeit with lower efficiency. Involved in the biosynthesis of the carbohydrate moieties of glycolipids and glycoproteins. Inactive towards substrates with terminal alpha-N-acetylglucosamine (alpha-GlcNAc) or alpha-N-acetylgalactosamine (alpha-GalNAc) residues. In Homo sapiens (Human), this protein is Beta-1,3-galactosyltransferase 2.